The sequence spans 317 residues: Acetyl-coenzyme A carboxylase carboxyl transferase subunit alpha (317 aa).

The CoA carboxyltransferase C-terminal domain maps to 32–293; the sequence is NLSEEIARLE…KRLLTSELQA (262 aa).

It belongs to the AccA family. In terms of assembly, acetyl-CoA carboxylase is a heterohexamer composed of biotin carboxyl carrier protein (AccB), biotin carboxylase (AccC) and two subunits each of ACCase subunit alpha (AccA) and ACCase subunit beta (AccD).

It is found in the cytoplasm. It carries out the reaction N(6)-carboxybiotinyl-L-lysyl-[protein] + acetyl-CoA = N(6)-biotinyl-L-lysyl-[protein] + malonyl-CoA. It participates in lipid metabolism; malonyl-CoA biosynthesis; malonyl-CoA from acetyl-CoA: step 1/1. Functionally, component of the acetyl coenzyme A carboxylase (ACC) complex. First, biotin carboxylase catalyzes the carboxylation of biotin on its carrier protein (BCCP) and then the CO(2) group is transferred by the carboxyltransferase to acetyl-CoA to form malonyl-CoA. The sequence is that of Acetyl-coenzyme A carboxylase carboxyl transferase subunit alpha from Legionella pneumophila (strain Paris).